The chain runs to 312 residues: Olfactory receptor 2L3 (312 aa).

The Extracellular segment spans residues 1-24; the sequence is MENYNQTSTDFILLGFFPPSRIGL. N-linked (GlcNAc...) asparagine glycosylation is present at Asn5. A helical membrane pass occupies residues 25–48; that stretch reads FLFILIVFIFLMALIGNLSMILLI. Residues 49-56 are Cytoplasmic-facing; it reads FLDTHLHT. The chain crosses the membrane as a helical span at residues 57 to 78; it reads PMYFLLSQLSLIDLNYISTIVP. At 79-99 the chain is on the extracellular side; that stretch reads KMASDFLSGNKSISFTGCGIQ. Residue Asn88 is glycosylated (N-linked (GlcNAc...) asparagine). A disulfide bond links Cys96 and Cys188. Residues 100 to 119 form a helical membrane-spanning segment; it reads SFFFSALGGAEALLLASMAY. Residues 120 to 138 lie on the Cytoplasmic side of the membrane; it reads DRYIAICFPLHYPIRMSKR. A helical transmembrane segment spans residues 139–157; the sequence is MCVLMITGSWIIGSINACA. At 158–194 the chain is on the extracellular side; it reads HTVYVLHIPYCQSRAINHFFCDVPAMVTLACMDTWVY. A helical membrane pass occupies residues 195–218; sequence EGTVFLSTTIFLVFPFIAISCSYG. The Cytoplasmic portion of the chain corresponds to 219 to 235; the sequence is RVLLAVYHMKSAEGRKK. Residues 236–258 traverse the membrane as a helical segment; the sequence is AYLTCSTHLTVVTFYYAPFVYTY. Over 259-271 the chain is Extracellular; that stretch reads LRPRSLRSPTEDK. The helical transmembrane segment at 272 to 291 threads the bilayer; the sequence is VLAVFYTTLTPMLNPIIYSL. The Cytoplasmic portion of the chain corresponds to 292–312; sequence RNKEVMGALTRVSQRICSGKM.

It belongs to the G-protein coupled receptor 1 family.

Its subcellular location is the cell membrane. Its function is as follows. Odorant receptor. The chain is Olfactory receptor 2L3 (OR2L3) from Homo sapiens (Human).